A 1469-amino-acid polypeptide reads, in one-letter code: uncharacterized protein (1469 aa).

A compositionally biased stretch (basic and acidic residues) spans 146-180; the sequence is GDHITPKEEEEKEKEKEKEKEKEKEKEKEKEKDSE. Disordered stretches follow at residues 146 to 186, 231 to 255, 306 to 344, 430 to 455, 520 to 560, 654 to 706, 719 to 755, 881 to 958, and 1329 to 1369; these read GDHI…LQEQ, IQNN…DNNN, TTTT…GGDS, LNFN…PYHY, PVKN…NNNS, TTTT…PLVR, RTQT…VKNQ, YNNI…NIIN, and NCSS…NSSN. 5 stretches are compositionally biased toward low complexity: residues 232–241, 306–327, 430–449, 523–559, and 654–693; these read QNNQNNQNNN, TTTT…ISNT, LNFN…NNNN, NNNN…INNN, and TTTT…TTTP. A compositionally biased stretch (polar residues) spans 719–731; the sequence is RTQTQLQTKIQPK. The span at 732–749 shows a compositional bias: pro residues; that stretch reads SPQPQPTAAPEPQKPPTP. Low complexity-rich tracts occupy residues 1329–1347 and 1354–1369; these read NCSS…SGSE and RSNT…NSSN.

This is an uncharacterized protein from Dictyostelium discoideum (Social amoeba).